The sequence spans 222 residues: Peptide methionine sulfoxide reductase MsrA (222 aa).

Residue cysteine 60 is part of the active site.

Belongs to the MsrA Met sulfoxide reductase family.

The enzyme catalyses L-methionyl-[protein] + [thioredoxin]-disulfide + H2O = L-methionyl-(S)-S-oxide-[protein] + [thioredoxin]-dithiol. It carries out the reaction [thioredoxin]-disulfide + L-methionine + H2O = L-methionine (S)-S-oxide + [thioredoxin]-dithiol. In terms of biological role, has an important function as a repair enzyme for proteins that have been inactivated by oxidation. Catalyzes the reversible oxidation-reduction of methionine sulfoxide in proteins to methionine. The chain is Peptide methionine sulfoxide reductase MsrA from Pseudomonas putida (strain ATCC 47054 / DSM 6125 / CFBP 8728 / NCIMB 11950 / KT2440).